The primary structure comprises 168 residues: Peptide deformylase (168 aa).

Cysteine 92 and histidine 134 together coordinate Fe cation. Glutamate 135 is a catalytic residue. Histidine 138 provides a ligand contact to Fe cation.

It belongs to the polypeptide deformylase family. Fe(2+) is required as a cofactor.

It carries out the reaction N-terminal N-formyl-L-methionyl-[peptide] + H2O = N-terminal L-methionyl-[peptide] + formate. Functionally, removes the formyl group from the N-terminal Met of newly synthesized proteins. Requires at least a dipeptide for an efficient rate of reaction. N-terminal L-methionine is a prerequisite for activity but the enzyme has broad specificity at other positions. This Pseudomonas aeruginosa (strain ATCC 15692 / DSM 22644 / CIP 104116 / JCM 14847 / LMG 12228 / 1C / PRS 101 / PAO1) protein is Peptide deformylase.